The sequence spans 300 residues: HTH-type transcriptional regulator ArgP (300 aa).

An HTH lysR-type domain is found at 4–60 (FDYKLLAALAAVVEQGGFERAAQALGLSQSAVSQRIKLLEARVGQPVLVRETPPHPT). Positions 21 to 40 (FERAAQALGLSQSAVSQRIK) form a DNA-binding region, H-T-H motif.

It belongs to the LysR transcriptional regulatory family. Homodimer.

Controls the transcription of genes involved in arginine and lysine metabolism. This is HTH-type transcriptional regulator ArgP from Pseudomonas aeruginosa (strain UCBPP-PA14).